The sequence spans 186 residues: Tumor necrosis factor alpha-induced protein 8-like protein 1 (186 aa).

Belongs to the TNFAIP8 family. Interacts with FBXW5; TNFAIP8L1 competes with TSC2 to bind FBXW5 increasing TSC2 stability by preventing its ubiquitination.

Its subcellular location is the cytoplasm. In terms of biological role, acts as a negative regulator of mTOR activity. The polypeptide is Tumor necrosis factor alpha-induced protein 8-like protein 1 (TNFAIP8L1) (Bos taurus (Bovine)).